A 456-amino-acid polypeptide reads, in one-letter code: Bifunctional protein GlmU (456 aa).

The tract at residues 1 to 229 is pyrophosphorylase; the sequence is MLNNAMSVVI…LSEVEGVNNR (229 aa). Residues 11–14, K25, Q76, 81–82, 103–105, G140, E154, N169, and N227 contribute to the UDP-N-acetyl-alpha-D-glucosamine site; these read LAAG, GT, and YGD. D105 serves as a coordination point for Mg(2+). Residue N227 participates in Mg(2+) binding. A linker region spans residues 230–250; the sequence is LQLSRLERVYQSEQAEKLLLA. An N-acetyltransferase region spans residues 251-456; the sequence is GVMLRDPARF…EGWRRPVKKK (206 aa). R333 and K351 together coordinate UDP-N-acetyl-alpha-D-glucosamine. H363 serves as the catalytic Proton acceptor. UDP-N-acetyl-alpha-D-glucosamine-binding residues include Y366 and N377. Acetyl-CoA is bound by residues A380, 386 to 387, S405, A423, and R440; that span reads NY.

It in the N-terminal section; belongs to the N-acetylglucosamine-1-phosphate uridyltransferase family. This sequence in the C-terminal section; belongs to the transferase hexapeptide repeat family. As to quaternary structure, homotrimer. Mg(2+) serves as cofactor.

The protein resides in the cytoplasm. It carries out the reaction alpha-D-glucosamine 1-phosphate + acetyl-CoA = N-acetyl-alpha-D-glucosamine 1-phosphate + CoA + H(+). It catalyses the reaction N-acetyl-alpha-D-glucosamine 1-phosphate + UTP + H(+) = UDP-N-acetyl-alpha-D-glucosamine + diphosphate. Its pathway is nucleotide-sugar biosynthesis; UDP-N-acetyl-alpha-D-glucosamine biosynthesis; N-acetyl-alpha-D-glucosamine 1-phosphate from alpha-D-glucosamine 6-phosphate (route II): step 2/2. It participates in nucleotide-sugar biosynthesis; UDP-N-acetyl-alpha-D-glucosamine biosynthesis; UDP-N-acetyl-alpha-D-glucosamine from N-acetyl-alpha-D-glucosamine 1-phosphate: step 1/1. It functions in the pathway bacterial outer membrane biogenesis; LPS lipid A biosynthesis. Catalyzes the last two sequential reactions in the de novo biosynthetic pathway for UDP-N-acetylglucosamine (UDP-GlcNAc). The C-terminal domain catalyzes the transfer of acetyl group from acetyl coenzyme A to glucosamine-1-phosphate (GlcN-1-P) to produce N-acetylglucosamine-1-phosphate (GlcNAc-1-P), which is converted into UDP-GlcNAc by the transfer of uridine 5-monophosphate (from uridine 5-triphosphate), a reaction catalyzed by the N-terminal domain. The polypeptide is Bifunctional protein GlmU (Shigella flexneri serotype 5b (strain 8401)).